We begin with the raw amino-acid sequence, 221 residues long: NEP1-interacting protein-like 1 (221 aa).

3 helical membrane-spanning segments follow: residues 35–55 (LFTF…GALI), 69–89 (VGAI…LLLW), and 95–115 (GIGC…GRLV). An RING-type; atypical zinc finger spans residues 176 to 218 (CSVCLQDFQVGETVRSLPHCHHMFHLPCIDKWLRRHASCPLCR).

Belongs to the RING-type zinc finger family. NIP subfamily.

It localises to the membrane. Functionally, may be involved in the early steps of the plant defense signaling pathway. In Arabidopsis thaliana (Mouse-ear cress), this protein is NEP1-interacting protein-like 1 (ATL27).